Reading from the N-terminus, the 338-residue chain is Methionine import ATP-binding protein MetN (338 aa).

In terms of domain architecture, ABC transporter spans 2–241 (ISLDGIRKVF…PKEHITKEFV (240 aa)). ATP is bound at residue 38 to 45 (GYSGAGKS).

This sequence belongs to the ABC transporter superfamily. Methionine importer (TC 3.A.1.24) family. As to quaternary structure, the complex is composed of two ATP-binding proteins (MetN), two transmembrane proteins (MetI) and a solute-binding protein (MetQ).

Its subcellular location is the cell membrane. The enzyme catalyses L-methionine(out) + ATP + H2O = L-methionine(in) + ADP + phosphate + H(+). It catalyses the reaction D-methionine(out) + ATP + H2O = D-methionine(in) + ADP + phosphate + H(+). In terms of biological role, part of the ABC transporter complex MetNIQ involved in methionine import. Responsible for energy coupling to the transport system. The polypeptide is Methionine import ATP-binding protein MetN (Halalkalibacterium halodurans (strain ATCC BAA-125 / DSM 18197 / FERM 7344 / JCM 9153 / C-125) (Bacillus halodurans)).